The chain runs to 244 residues: Triosephosphate isomerase (244 aa).

Substrate is bound at residue asparagine 9–lysine 11. Residue histidine 93 is the Electrophile of the active site. The Proton acceptor role is filled by glutamate 160. Substrate contacts are provided by glycine 166 and serine 206.

Belongs to the triosephosphate isomerase family. Homodimer.

Its subcellular location is the cytoplasm. The enzyme catalyses D-glyceraldehyde 3-phosphate = dihydroxyacetone phosphate. It participates in carbohydrate biosynthesis; gluconeogenesis. The protein operates within carbohydrate degradation; glycolysis; D-glyceraldehyde 3-phosphate from glycerone phosphate: step 1/1. Its function is as follows. Involved in the gluconeogenesis. Catalyzes stereospecifically the conversion of dihydroxyacetone phosphate (DHAP) to D-glyceraldehyde-3-phosphate (G3P). The polypeptide is Triosephosphate isomerase (Mycoplasma pneumoniae (strain ATCC 29342 / M129 / Subtype 1) (Mycoplasmoides pneumoniae)).